The primary structure comprises 137 residues: Thionin BTH7 (137 aa).

The first 28 residues, 1–28 (MATNKSIKSVVICVLILGLVLEQVQVEG), serve as a signal peptide directing secretion. 4 cysteine pairs are disulfide-bonded: C31–C68, C32–C60, C40–C58, and C44–C54. A propeptide spans 75-137 (LNLLPESGEP…DGEVIQSVEA (63 aa)) (acidic domain).

Belongs to the plant thionin (TC 1.C.44) family. 4 C-C subfamily.

It is found in the secreted. Functionally, thionins are small plant proteins which are toxic to animal cells. They seem to exert their toxic effect at the level of the cell membrane. Their precise function is not known. The polypeptide is Thionin BTH7 (Hordeum vulgare (Barley)).